We begin with the raw amino-acid sequence, 368 residues long: Peptide chain release factor 2 (368 aa).

Residue Q250 is modified to N5-methylglutamine.

It belongs to the prokaryotic/mitochondrial release factor family. Methylated by PrmC. Methylation increases the termination efficiency of RF2.

Its subcellular location is the cytoplasm. Functionally, peptide chain release factor 2 directs the termination of translation in response to the peptide chain termination codons UGA and UAA. The sequence is that of Peptide chain release factor 2 from Rickettsia felis (strain ATCC VR-1525 / URRWXCal2) (Rickettsia azadi).